We begin with the raw amino-acid sequence, 854 residues long: Aryl hydrocarbon receptor (854 aa).

Positions 1–9 (MSSGANITY) are excised as a propeptide. The tract at residues 1–38 (MSSGANITYASRKRRKPVQKTVKPIPAEGIKSNPSKRH) is disordered. 2 consecutive short sequence motifs (nuclear localization signal) follow at residues 12–15 (RKRR) and 36–41 (KRHRDR). The bHLH domain occupies 26 to 79 (PAEGIKSNPSKRHRDRLNTELDRLASLLPFPQDVINKLDKLSVLRLSVSYLRAK). The tract at residues 37–65 (RHRDRLNTELDRLASLLPFPQDVINKLDK) is DNA-binding. Required for maintaining the overall integrity of the AHR:ARNT heterodimer and its transcriptional activity stretches follow at residues 49–81 (LASL…AKSF), 116–124 (LLQALNGFV), and 264–266 (FAI). Positions 63–71 (LDKLSVLRL) match the Nuclear export signal motif. One can recognise a PAS 1 domain in the interval 111 to 175 (QEGEFLLQAL…AEFQRQLHWA (65 aa)). Positions 270-340 (LQPPSILEIR…CAESHIRMIK (71 aa)) constitute a PAS 2 domain. Residues 346 to 387 (MTVFRLLAKHSRWRWVQSNARLIYRNGRPDYIIATQRPLTDE) form the PAC domain. The segment at 425–452 (LPIRTKSNTSRKDWAPQSTPSKDSFHPS) is disordered. The span at 440 to 452 (PQSTPSKDSFHPS) shows a compositional bias: polar residues.

As to quaternary structure, homodimer. Heterodimer; efficient DNA binding requires dimerization with another bHLH protein. Interacts with ARNT; the heterodimer ARNT:AHR binds to core DNA sequence 5'-TGCGTG-3' within the dioxin response element (DRE) of target gene promoters and activates their transcription. Binds MYBBP1A. Interacts with coactivators including SRC-1, RIP140 and NOCA7, and with the corepressor SMRT. Interacts with NEDD8 and IVNS1ABP. Interacts with BMAL1. Interacts with HSP90AB1. Interacts with TIPARP; leading to mono-ADP-ribosylation of AHR and subsequent inhibition of AHR. Mono-ADP-ribosylated, leading to inhibit transcription activator activity of AHR.

It localises to the cytoplasm. It is found in the nucleus. Functionally, ligand-activated transcription factor that enables cells to adapt to changing conditions by sensing compounds from the environment, diet, microbiome and cellular metabolism, and which plays important roles in development, immunity and cancer. Upon ligand binding, translocates into the nucleus, where it heterodimerizes with ARNT and induces transcription by binding to xenobiotic response elements (XRE). Regulates a variety of biological processes, including angiogenesis, hematopoiesis, drug and lipid metabolism, cell motility and immune modulation. Xenobiotics can act as ligands: upon xenobiotic-binding, activates the expression of multiple phase I and II xenobiotic chemical metabolizing enzyme genes (such as the CYP1A1 gene). Mediates biochemical and toxic effects of halogenated aromatic hydrocarbons. Next to xenobiotics, natural ligands derived from plants, microbiota, and endogenous metabolism are potent AHR agonists. Tryptophan (Trp) derivatives constitute an important class of endogenous AHR ligands. Acts as a negative regulator of anti-tumor immunity: indoles and kynurenic acid generated by Trp catabolism act as ligand and activate AHR, thereby promoting AHR-driven cancer cell motility and suppressing adaptive immunity. Regulates the circadian clock by inhibiting the basal and circadian expression of the core circadian component PER1. Inhibits PER1 by repressing the CLOCK-BMAL1 heterodimer mediated transcriptional activation of PER1. The heterodimer ARNT:AHR binds to core DNA sequence 5'-TGCGTG-3' within the dioxin response element (DRE) of target gene promoters and activates their transcription. The protein is Aryl hydrocarbon receptor (Ahr) of Mus spretus (Western Mediterranean mouse).